The following is a 405-amino-acid chain: FAD-dependent monooxygenase thnD (405 aa).

The FAD site is built by Glu-30, Ala-45, Arg-106, Asp-308, and Gly-321.

The protein belongs to the paxM FAD-dependent monooxygenase family. It depends on FAD as a cofactor.

FAD-dependent monooxygenase; part of the gene cluster that produces the tetronate natural products trihazones. Transcription analysis of thnD confirmed this gene is expressed, hence its role in the biosynthetic pathway remains cryptic. The pathway begins with the formation of trihazone A by the hybrid PKS-NRPS synthetase thnA and the trans-enoyl reductase thnE. Trihazone A is further decarboxylated by the 2-oxoglutarate-dependent dioxygenase thnC to produce trihazone D. The function of the FAD-dependent monooxygenase thnD has still to be identified. This is FAD-dependent monooxygenase thnD from Trichoderma harzianum (Hypocrea lixii).